The following is a 212-amino-acid chain: Regulatory protein RecX (212 aa).

The protein belongs to the RecX family.

The protein localises to the cytoplasm. Functionally, modulates RecA activity. This chain is Regulatory protein RecX, found in Clostridium botulinum (strain Alaska E43 / Type E3).